The primary structure comprises 153 residues: Transcriptional repressor NrdR 2 (153 aa).

The segment at Cys-3–Cys-34 is a zinc-finger region. In terms of domain architecture, ATP-cone spans Leu-49–Asp-139.

It belongs to the NrdR family. The cofactor is Zn(2+).

Its function is as follows. Negatively regulates transcription of bacterial ribonucleotide reductase nrd genes and operons by binding to NrdR-boxes. The protein is Transcriptional repressor NrdR 2 of Paramagnetospirillum magneticum (strain ATCC 700264 / AMB-1) (Magnetospirillum magneticum).